A 438-amino-acid polypeptide reads, in one-letter code: Adenylyltransferase and sulfurtransferase UBA4 (438 aa).

ATP contacts are provided by residues G81, D102, 109–113 (SNLHR), K126, and 170–171 (DH). Residues C212 and C215 each contribute to the Zn(2+) site. C229 (glycyl thioester intermediate; for adenylyltransferase activity) is an active-site residue. Zn(2+) contacts are provided by C290 and C293. Residues 340-436 (NKKKHILIDV…WSDDVDSKIP (97 aa)) form the Rhodanese domain. The active-site Cysteine persulfide intermediate; for sulfurtransferase activity is the C396.

The protein in the N-terminal section; belongs to the HesA/MoeB/ThiF family. UBA4 subfamily. Requires Zn(2+) as cofactor.

It is found in the cytoplasm. Its subcellular location is the cytosol. Its pathway is tRNA modification; 5-methoxycarbonylmethyl-2-thiouridine-tRNA biosynthesis. Its function is as follows. Plays a central role in 2-thiolation of mcm(5)S(2)U at tRNA wobble positions of cytosolic tRNA(Lys), tRNA(Glu) and tRNA(Gln). Acts by mediating the C-terminal thiocarboxylation of sulfur carrier URM1. Its N-terminus first activates URM1 as acyl-adenylate (-COAMP), then the persulfide sulfur on the catalytic cysteine is transferred to URM1 to form thiocarboxylation (-COSH) of its C-terminus. The reaction probably involves hydrogen sulfide that is generated from the persulfide intermediate and that acts as a nucleophile towards URM1. Subsequently, a transient disulfide bond is formed. Does not use thiosulfate as sulfur donor; NFS1 probably acting as a sulfur donor for thiocarboxylation reactions. Prior mcm(5) tRNA modification by the elongator complex is required for 2-thiolation. May also be involved in protein urmylation. In Candida albicans (strain SC5314 / ATCC MYA-2876) (Yeast), this protein is Adenylyltransferase and sulfurtransferase UBA4.